We begin with the raw amino-acid sequence, 91 residues long: Small ribosomal subunit protein bS18 (91 aa).

Over residues 1–14 (MTNQNQSQTQTTQT) the composition is skewed to low complexity. Positions 1–24 (MTNQNQSQTQTTQTVEKVSSRQKK) are disordered.

The protein belongs to the bacterial ribosomal protein bS18 family. As to quaternary structure, part of the 30S ribosomal subunit. Forms a tight heterodimer with protein bS6.

Its function is as follows. Binds as a heterodimer with protein bS6 to the central domain of the 16S rRNA, where it helps stabilize the platform of the 30S subunit. The chain is Small ribosomal subunit protein bS18 from Caldicellulosiruptor saccharolyticus (strain ATCC 43494 / DSM 8903 / Tp8T 6331).